The primary structure comprises 646 residues: MMKFKLVSDYRPLGDQPKAIRSLVNGIKAGMREQTLLGVTGSGKTFTVANVIAEVQKPTLVISHNKTLAAQLYEEFREFFPENAVEYFVSYYDFYQPEAYIPQTDTYIDKEASINDEIDRMRHSATQSLLSRDDVIVVSSVSCIYGIGAPTDYGEFTLHLEVGSGPGREEVLEGLINMQYERNDVEFDRGQFRVRGDTVEINPIHGTPPIRIEFFGDEIDSISTVHRVTGRRIQKLDRVTIFPAKHFVIPEDRLQRAIESIEAELEERLTELRSQNKLLEAQRLEQRTRFDMEMLREMGYCQGIENYSMHLSGRKWGEKPNTLLDYFPEDFLTVIDESHVTVPQIRGMYNGDRARKDTLVEYGFRLPSARENRPLRFDEFQESVNQVIYVSATPGRYELSRSQNIVEQIIRPTGLVDPEVRIRPVKGQVDDLLSEIRRRVERGERVLVTTLTKRMAEDLTDYYSRVGVKVRYLHSEIDTLERVEIIDDLRRGEFDCLVGVNLLREGLDLPEVALVAILDADKEGFLRSETSLIQTIGRAARNVNGEVLIYAGRFTDSVMAAVETTNRRRKLQMEYNRRHGIKPRSTRRTLREEEGPLRNLKVDEIPDHELELIIKDLEAEMRDAARNLEFERAARIRDRIMSLKSN.

The Helicase ATP-binding domain maps to 25–412 (NGIKAGMREQ…QNIVEQIIRP (388 aa)). 38 to 45 (GVTGSGKT) serves as a coordination point for ATP. Residues 91–114 (YYDFYQPEAYIPQTDTYIDKEASI) carry the Beta-hairpin motif. Positions 428–594 (QVDDLLSEIR…STRRTLREEE (167 aa)) constitute a Helicase C-terminal domain. In terms of domain architecture, UVR spans 611–646 (ELIIKDLEAEMRDAARNLEFERAARIRDRIMSLKSN).

Belongs to the UvrB family. As to quaternary structure, forms a heterotetramer with UvrA during the search for lesions. Interacts with UvrC in an incision complex.

It localises to the cytoplasm. In terms of biological role, the UvrABC repair system catalyzes the recognition and processing of DNA lesions. A damage recognition complex composed of 2 UvrA and 2 UvrB subunits scans DNA for abnormalities. Upon binding of the UvrA(2)B(2) complex to a putative damaged site, the DNA wraps around one UvrB monomer. DNA wrap is dependent on ATP binding by UvrB and probably causes local melting of the DNA helix, facilitating insertion of UvrB beta-hairpin between the DNA strands. Then UvrB probes one DNA strand for the presence of a lesion. If a lesion is found the UvrA subunits dissociate and the UvrB-DNA preincision complex is formed. This complex is subsequently bound by UvrC and the second UvrB is released. If no lesion is found, the DNA wraps around the other UvrB subunit that will check the other stand for damage. The chain is UvrABC system protein B from Methanothermobacter thermautotrophicus (strain ATCC 29096 / DSM 1053 / JCM 10044 / NBRC 100330 / Delta H) (Methanobacterium thermoautotrophicum).